Consider the following 676-residue polypeptide: WD repeat-containing protein 48 (676 aa).

Residue Tyr-28 is modified to Phosphotyrosine. WD repeat units follow at residues 28 to 67 (YNRNGVNALQLDPALNRLFTAGRDSIIRIWSVNQHKQDPY), 73 to 112 (HHTDWVNDVVLCCNGKTLISASSDTTVKVWNAHKGFCMST), 115 to 154 (THKDYVKALAYAKDKELVASAGLDRQIFLWDVNTLTALTA), 166 to 205 (GNKDSIYSLAMNQLGTIIVSGSTEKVLRVWDPRTCAKLMK), 208 to 247 (GHTDNVKALLLHRDGTQCLSGSSDGTIRLWSLGQQRCIAT), 250 to 289 (VHDEGVWALQVNDAFTHVYSGGRDRKIYCTDLRNPDIRVL), 292 to 334 (EEKA…NFRA), and 358 to 397 (KGGASIIQCHILNDKRHILTKDTNNNVAYWDVLKACKVED). The residue at position 214 (Lys-214) is an N6-acetyllysine. Lys-578 is subject to N6-acetyllysine. The segment at 607 to 628 (LDNESQTTSSSNNEKPEQEKEE) is disordered. A compositionally biased stretch (low complexity) spans 609-619 (NESQTTSSSNN). The residue at position 613 (Thr-613) is a Phosphothreonine.

The protein belongs to the WD repeat WDR48 family. In terms of assembly, interacts with USP46. Interacts with USP1. Interacts with USP12. Component of the USP12-WDR20-WDR48 deubiquitinating complex. Component of the USP12-DMWD-WDR48 deubiquitinating complex. Interacts with PHLPP1. Interacts with RAD51AP1; the interaction is direct and promotes formation of a trimeric complex with RAD51 via RAD51AP1. Interacts with ATAD5; the interaction regulates USP1-mediated PCNA deubiquitination. Interacts with RAD51; the interaction is enhanced under replication stress. Interacts with ITCH; the interaction is more efficient when both USP12 and WDR48/UAF1 are involved and may facilitate recruitment of the USP12 deubiquitinating complex to Notch.

It is found in the nucleus. The protein resides in the cytoplasm. The protein localises to the lysosome. It localises to the late endosome. Regulator of deubiquitinating complexes, which acts as a strong activator of USP1, USP12 and USP46. Enhances the USP1-mediated deubiquitination of FANCD2; USP1 being almost inactive by itself. Activates deubiquitination by increasing the catalytic turnover without increasing the affinity of deubiquitinating enzymes for the substrate. Also activates deubiquitinating activity of complexes containing USP12. Docks at the distal end of the USP12 fingers domain and induces a cascade of structural changes leading to the activation of the enzyme. Together with RAD51AP1, promotes DNA repair by stimulating RAD51-mediated homologous recombination. Binds single-stranded DNA (ssDNA) and double-stranded DNA (dsDNA). DNA-binding is required both for USP1-mediated deubiquitination of FANCD2 and stimulation of RAD51-mediated homologous recombination: both WDR48/UAF1 and RAD51AP1 have coordinated role in DNA-binding during these processes. Together with ATAD5 and by regulating USP1 activity, has a role in PCNA-mediated translesion synthesis (TLS) by deubiquitinating monoubiquitinated PCNA. Together with ATAD5, has a role in recruiting RAD51 to stalled forks during replication stress. In Mus musculus (Mouse), this protein is WD repeat-containing protein 48 (Wdr48).